Reading from the N-terminus, the 206-residue chain is Urease accessory protein UreG (206 aa).

A GTP-binding site is contributed by Gly-12–Thr-19.

It belongs to the SIMIBI class G3E GTPase family. UreG subfamily. As to quaternary structure, homodimer. UreD, UreF and UreG form a complex that acts as a GTP-hydrolysis-dependent molecular chaperone, activating the urease apoprotein by helping to assemble the nickel containing metallocenter of UreC. The UreE protein probably delivers the nickel.

The protein localises to the cytoplasm. In terms of biological role, facilitates the functional incorporation of the urease nickel metallocenter. This process requires GTP hydrolysis, probably effectuated by UreG. This chain is Urease accessory protein UreG, found in Synechocystis sp. (strain ATCC 27184 / PCC 6803 / Kazusa).